A 622-amino-acid chain; its full sequence is Galactolipid galactosyltransferase SFR2, chloroplastic (622 aa).

Topologically, residues 1–3 (MEL) are stromal. A helical; Signal-anchor membrane pass occupies residues 4–24 (FALLIKVAGLLATVTVGANVV). At 25–622 (SYSRFRRQNL…LHPALASPFD (598 aa)) the chain is on the cytoplasmic side. Residues histidine 222, 266 to 267 (NE), tyrosine 377, glutamate 429, tryptophan 467, 474 to 475 (EW), and phenylalanine 483 contribute to the a beta-D-glucoside site. Glutamate 267 functions as the Proton donor in the catalytic mechanism. Residue glutamate 429 is the Nucleophile of the active site.

It belongs to the glycosyl hydrolase 1 family. Expressed in hypocotyls, cotyledons, stems, leaves, pedicels, sepals, anthers and pistils. Limited expression in roots. Not detected in petals or filaments.

Its subcellular location is the plastid. It localises to the chloroplast. It is found in the chloroplast outer membrane. It carries out the reaction 2 a 1,2-diacyl-3-O-(beta-D-galactosyl)-sn-glycerol = a 1,2-diacyl-3-O-[beta-D-galactosyl-(1-&gt;6)-beta-D-galactosyl]-sn-glycerol + a 1,2-diacyl-sn-glycerol. With respect to regulation, induced by MgCl(2). Glycosyl hydrolase family protein acting primarily as a highly specific galactosyltransferase. Synthesizes digalactosyldiacylglycerol from monogalactosyldiacylglycerol in the absence of UDP-galactose in vitro. Hydrolyzes o- and p-nitrophenyl beta-D-glucoside in vitro. Plays a role in freezing tolerance. May play a role in chloroplast protection. This chain is Galactolipid galactosyltransferase SFR2, chloroplastic, found in Arabidopsis thaliana (Mouse-ear cress).